A 427-amino-acid polypeptide reads, in one-letter code: Trigger factor (427 aa).

The PPIase FKBP-type domain occupies 163–248 (GDTVVIDFVG…IHEVKTKEVP (86 aa)).

This sequence belongs to the FKBP-type PPIase family. Tig subfamily.

It localises to the cytoplasm. It carries out the reaction [protein]-peptidylproline (omega=180) = [protein]-peptidylproline (omega=0). Its function is as follows. Involved in protein export. Acts as a chaperone by maintaining the newly synthesized protein in an open conformation. Functions as a peptidyl-prolyl cis-trans isomerase. This chain is Trigger factor, found in Streptococcus pyogenes serotype M18 (strain MGAS8232).